The chain runs to 968 residues: Protein translocase subunit SecA (968 aa).

ATP-binding positions include glutamine 99, 117-121 (GEGKT), and aspartate 631.

Belongs to the SecA family. Monomer and homodimer. Part of the essential Sec protein translocation apparatus which comprises SecA, SecYEG and auxiliary proteins SecDF. Other proteins may also be involved.

It localises to the cell inner membrane. Its subcellular location is the cytoplasm. The catalysed reaction is ATP + H2O + cellular proteinSide 1 = ADP + phosphate + cellular proteinSide 2.. Part of the Sec protein translocase complex. Interacts with the SecYEG preprotein conducting channel. Has a central role in coupling the hydrolysis of ATP to the transfer of proteins into and across the cell membrane, serving as an ATP-driven molecular motor driving the stepwise translocation of polypeptide chains across the membrane. In Chlamydia muridarum (strain MoPn / Nigg), this protein is Protein translocase subunit SecA.